A 149-amino-acid chain; its full sequence is Cell division protein SepF (149 aa).

It belongs to the SepF family. Homodimer. Interacts with FtsZ.

The protein resides in the cytoplasm. Its function is as follows. Cell division protein that is part of the divisome complex and is recruited early to the Z-ring. Probably stimulates Z-ring formation, perhaps through the cross-linking of FtsZ protofilaments. Its function overlaps with FtsA. This chain is Cell division protein SepF, found in Clostridium perfringens (strain ATCC 13124 / DSM 756 / JCM 1290 / NCIMB 6125 / NCTC 8237 / Type A).